Reading from the N-terminus, the 410-residue chain is Translation initiation factor 2 subunit gamma (410 aa).

The region spanning 6 to 203 (QSEVNIGMVG…AIQEFIPTPK (198 aa)) is the tr-type G domain. The G1 stretch occupies residues 15–22 (GHVDHGKT). The Mg(2+) site is built by Asp18, Thr22, Gly43, and Ser45. Residue 18 to 23 (DHGKTS) coordinates GTP. The tract at residues 43 to 47 (GISIR) is G2. Zn(2+)-binding residues include Cys58, Cys61, Cys73, and Cys76. Residues 90–93 (DAPG) are G3. GTP contacts are provided by residues 146–149 (NKID) and 181–183 (SAH). Residues 146–149 (NKID) form a G4 region. Positions 181–183 (SAH) are G5.

The protein belongs to the TRAFAC class translation factor GTPase superfamily. Classic translation factor GTPase family. EIF2G subfamily. As to quaternary structure, heterotrimer composed of an alpha, a beta and a gamma chain. The cofactor is Mg(2+).

The enzyme catalyses GTP + H2O = GDP + phosphate + H(+). In terms of biological role, eIF-2 functions in the early steps of protein synthesis by forming a ternary complex with GTP and initiator tRNA. The sequence is that of Translation initiation factor 2 subunit gamma from Methanococcus maripaludis (strain C6 / ATCC BAA-1332).